The primary structure comprises 2033 residues: Envoplakin (2033 aa).

Residues 1–27 (MFKGLSKGSQGKGSPKGSPAKGSPKGS) show a composition bias toward low complexity. Disordered regions lie at residues 1–37 (MFKG…AATQ) and 65–85 (QQDR…ETGR). The tract at residues 1 to 841 (MFKGLSKGSQ…LEPTLAVSAP (841 aa)) is globular 1. Residues 12–28 (KGSPKGSPAKGSPKGSP) are 4 X 4 AA tandem repeats of K-G-S-P. Residues 71-84 (SEQSQALQHQQETG) show a composition bias toward polar residues. One copy of the Spectrin repeat lies at 229-330 (YTHLQGCTRQ…LCICQETQLQ (102 aa)). Positions 388–401 (TERATGDLQRRSRD) are enriched in basic and acidic residues. Disordered regions lie at residues 388–418 (TERA…PLHV) and 891–916 (SEDI…ESEA). The SH3 domain maps to 413 to 470 (QQPLHVDSICDWDSGEVQLLQGERYKLVDNTDPHAWVVQGPGGETKRAPAACFCIPAP). A central fibrous rod domain region spans residues 842-1673 (KRPRVAPLQE…AKVSREELSQ (832 aa)). The stretch at 845–1135 (RVAPLQESIQ…AISSVEPKVI (291 aa)) forms a coiled coil. Residues 891–902 (SEDIRRTHDAKQ) show a composition bias toward basic and acidic residues. One copy of the Plectin 1 repeat lies at 1185-1226 (KQRPKVQLQERVHEIFQVDPETEQEITRLKAKLQEMAGKRSG). A Phosphoserine modification is found at Ser1575. Residues 1614–1623 (QEESKLLSQK) show a composition bias toward low complexity. The disordered stretch occupies residues 1614-1636 (QEESKLLSQKTESERQKAAQRGQ). Residues 1674-2033 (ETQTRETNLS…ASPTVPRSLR (360 aa)) are globular 2. The Plectin 2 repeat unit spans residues 1678-1713 (RETNLSTKISILEPETGKDMSPYEAYKRGIIDRGQY). Residue Ser1799 is modified to Phosphoserine. Plectin repeat units follow at residues 1818 to 1855 (LGLG…PITG), 1856 to 1893 (QKLL…NTST), 1894 to 1931 (QRLL…RESV), 1932 to 1969 (LPHL…EELA), and 1970 to 2007 (QLLQ…PLSG). Ser2025 is subject to Phosphoserine.

Belongs to the plakin or cytolinker family. In terms of assembly, may form a homodimer or a heterodimer with PPL. As to expression, exclusively expressed in stratified squamous epithelia.

It localises to the cell junction. It is found in the desmosome. The protein resides in the cornified envelope. The protein localises to the cytoplasm. Its subcellular location is the cytoskeleton. In terms of biological role, component of the cornified envelope of keratinocytes. May link the cornified envelope to desmosomes and intermediate filaments. This Homo sapiens (Human) protein is Envoplakin (EVPL).